The chain runs to 603 residues: Spastin (603 aa).

Residues 1–34 (MNSPGGRNNKKKPVTPAAETGPGPPTPPPPPAET) are disordered. Topologically, residues 1–54 (MNSPGGRNNKKKPVTPAAETGPGPPTPPPPPAETQVLLAPPSLHKRNLYLFSYP) are cytoplasmic. Residues 22–32 (PGPPTPPPPPA) are compositionally biased toward pro residues. An intramembrane region (helical) is located at residues 55-75 (LLAAFSLLRFLAFQLGLLFVW). Topologically, residues 76–603 (FCERLSRRVM…WNKEFGDTTV (528 aa)) are cytoplasmic. The MIT domain occupies 113–188 (YHQQAFQYIS…LMAKDRLQLL (76 aa)). The interval 216 to 294 (GLLKPEKGAV…RTNKPTTPTT (79 aa)) is disordered. The span at 219–231 (KPEKGAVPKKKDP) shows a compositional bias: basic and acidic residues. Residues 281–294 (KNNTRTNKPTTPTT) show a composition bias toward low complexity. 369 to 376 (GPPGNGKT) is an ATP binding site.

Belongs to the AAA ATPase family. Spastin subfamily. Homohexamer. The homohexamer is stabilized by ATP-binding. The homohexamer may adopt a ring conformation through which microtubules pass prior to being severed. Interacts with microtubules.

The protein resides in the membrane. Its subcellular location is the cytoplasm. The protein localises to the cytoskeleton. It localises to the microtubule organizing center. It is found in the centrosome. The protein resides in the perinuclear region. Its subcellular location is the nucleus. The catalysed reaction is n ATP + n H2O + a microtubule = n ADP + n phosphate + (n+1) alpha/beta tubulin heterodimers.. ATP-dependent microtubule severing protein that specifically recognizes and cuts microtubules that are polyglutamylated. Preferentially recognizes and acts on microtubules decorated with short polyglutamate tails: severing activity increases as the number of glutamates per tubulin rises from one to eight, but decreases beyond this glutamylation threshold. Microtubule severing promotes reorganization of cellular microtubule arrays and the release of microtubules from the centrosome following nucleation. Required for membrane traffic from the endoplasmic reticulum (ER) to the Golgi and for completion of the abscission stage of cytokinesis. Also plays a role in axon growth and the formation of axonal branches. The chain is Spastin from Xenopus tropicalis (Western clawed frog).